Consider the following 245-residue polypeptide: MKILISNDDGYLAPGLIALADAMAAIADIVVVAPDSNRSGSSNSLTLDRPLSVYQAANGFYFINGTPSDCVHIALTGIMSEPPDLIVSGINQGQNMGDDTLYSGTVAAATEGFLFGIPAIAFSQVNKGWGQIDAAARVARDIVERRFDTYGKPFLLNVNIPNLPYEQMKSPVATRLGKRHQSEAVIKAQDPHGRDIYWIGPCGGQKDAGEGTDFHATALGHVSITPLQIDLTHTAQLEALKKVLV.

Residues Asp-8, Asp-9, Ser-39, and Asn-91 each contribute to the a divalent metal cation site.

Belongs to the SurE nucleotidase family. It depends on a divalent metal cation as a cofactor.

The protein localises to the cytoplasm. The enzyme catalyses a ribonucleoside 5'-phosphate + H2O = a ribonucleoside + phosphate. Its function is as follows. Nucleotidase that shows phosphatase activity on nucleoside 5'-monophosphates. This is 5'-nucleotidase SurE from Janthinobacterium sp. (strain Marseille) (Minibacterium massiliensis).